A 122-amino-acid chain; its full sequence is Anti-sigma-F factor antagonist RsfB (122 aa).

The 109-residue stretch at 7 to 115 (ITVTVADHNG…STLHDALTGV (109 aa)) folds into the STAS domain. S61 is subject to Phosphoserine.

The protein belongs to the anti-sigma-factor antagonist family. As to quaternary structure, interacts with anti-sigma-F factor RsbW (UsfX). Its phosphorylation may prevent this interaction. Putative phosphorylation on Ser-61 may prevent interaction with RsbW.

In terms of biological role, positive regulator of sigma-F (SigF) activity. Binds to anti-sigma-F factor RsbW (UsfX) preventing its binding to SigF, thus activating transcription. This is Anti-sigma-F factor antagonist RsfB (rsfB) from Mycobacterium tuberculosis (strain CDC 1551 / Oshkosh).